The sequence spans 281 residues: Energy-coupling factor transporter ATP-binding protein EcfA1 (281 aa).

Residues 6–245 (IKSEDLVFKY…VEKIKSIGLD (240 aa)) form the ABC transporter domain. Position 44-51 (44-51 (GHNGSGKS)) interacts with ATP.

This sequence belongs to the ABC transporter superfamily. Energy-coupling factor EcfA family. As to quaternary structure, forms a stable energy-coupling factor (ECF) transporter complex composed of 2 membrane-embedded substrate-binding proteins (S component), 2 ATP-binding proteins (A component) and 2 transmembrane proteins (T component).

The protein localises to the cell membrane. ATP-binding (A) component of a common energy-coupling factor (ECF) ABC-transporter complex. Unlike classic ABC transporters this ECF transporter provides the energy necessary to transport a number of different substrates. The polypeptide is Energy-coupling factor transporter ATP-binding protein EcfA1 (Clostridium perfringens (strain ATCC 13124 / DSM 756 / JCM 1290 / NCIMB 6125 / NCTC 8237 / Type A)).